A 186-amino-acid polypeptide reads, in one-letter code: Probable peptidyl-tRNA hydrolase 2 (186 aa).

It belongs to the PTH2 family.

It carries out the reaction an N-acyl-L-alpha-aminoacyl-tRNA + H2O = an N-acyl-L-amino acid + a tRNA + H(+). Its function is as follows. The natural substrate for this enzyme may be peptidyl-tRNAs which drop off the ribosome during protein synthesis. The protein is Probable peptidyl-tRNA hydrolase 2 of Drosophila melanogaster (Fruit fly).